The primary structure comprises 185 residues: Ribosome-recycling factor (185 aa).

Belongs to the RRF family.

It is found in the cytoplasm. Functionally, responsible for the release of ribosomes from messenger RNA at the termination of protein biosynthesis. May increase the efficiency of translation by recycling ribosomes from one round of translation to another. The sequence is that of Ribosome-recycling factor from Clostridium botulinum (strain Alaska E43 / Type E3).